We begin with the raw amino-acid sequence, 487 residues long: MERSGQRVTTWDCDQGKHSDSDYREDGMDLGSDAGSSSSSSRASSQSNSTKVTPCSECKSSSSPGGSLDLVSALEDYEEPFPVYQKKVIDEWAPEEDGEEEEEEDERDQRGYRDDRSPAREPGDVSARTRSGGGGGRSATTAMPPPVPNGNLHQHDPQDLRHNGNVVVAGRPSCSRGPRRAIQKPQPAGGRRSGRGPAAGGLCLQPPDGGTCVPEEPPVPPMDWEALEKHLAGLQFREQEVRNQGQARTNSTSAQKNERESIRQKLALGSFFDDGPGIYTSCSKSGKPSLSSRLQSGMNLQICFVNDSGSDKDSDADDSKTETSLDTPLSPMSKQSSSYSDRDTTEEESESLDDMDFLTRQKKLQAEAKMALAMAKPMAKMQVEVEKQNRKKSPVADLLPHMPHISECLMKRSLKPTDLRDMTIGQLQVIVNDLHSQIESLNEELVQLLLIRDELHTEQDAMLVDIEDLTRHAESQQKHMAEKMPAK.

Disordered stretches follow at residues 1–74 (MERS…VSAL), 88–221 (VIDE…PVPP), 236–260 (FREQ…NERE), and 308–354 (SGSD…SLDD). The segment covering 14 to 27 (DQGKHSDSDYREDG) has biased composition (basic and acidic residues). Low complexity predominate over residues 32 to 67 (SDAGSSSSSSRASSQSNSTKVTPCSECKSSSSPGGS). Residues 92-106 (WAPEEDGEEEEEEDE) show a composition bias toward acidic residues. Basic and acidic residues-rich tracts occupy residues 107-123 (RDQR…REPG) and 153-162 (HQHDPQDLRH). The residue at position 117 (S117) is a Phosphoserine. Residues 242–255 (RNQGQARTNSTSAQ) show a composition bias toward polar residues. The segment covering 309–323 (GSDKDSDADDSKTET) has biased composition (basic and acidic residues). The span at 324-335 (SLDTPLSPMSKQ) shows a compositional bias: polar residues. Residues 344–354 (TTEEESESLDD) show a composition bias toward acidic residues. Positions 424 to 458 (IGQLQVIVNDLHSQIESLNEELVQLLLIRDELHTE) form a coiled coil.

It belongs to the SCHIP1 family. Homooligomer (via coiled coil domain). Interacts with NF2; the interaction is direct. Interacts with ANK3. In terms of tissue distribution, preferentially expressed in brain, skeletal muscles and heart. Also expressed in detected in pancreas, kidney, liver, lung, and placenta.

It is found in the cytoplasm. The protein is Schwannomin-interacting protein 1 of Homo sapiens (Human).